The chain runs to 146 residues: Anti-sigma F factor (146 aa).

Belongs to the anti-sigma-factor family.

The enzyme catalyses L-seryl-[protein] + ATP = O-phospho-L-seryl-[protein] + ADP + H(+). It carries out the reaction L-threonyl-[protein] + ATP = O-phospho-L-threonyl-[protein] + ADP + H(+). Functionally, binds to sigma F and blocks its ability to form an RNA polymerase holoenzyme (E-sigma F). Phosphorylates SpoIIAA on a serine residue. This phosphorylation may enable SpoIIAA to act as an anti-anti-sigma factor that counteracts SpoIIAB and thus releases sigma F from inhibition. This is Anti-sigma F factor from Halalkalibacterium halodurans (strain ATCC BAA-125 / DSM 18197 / FERM 7344 / JCM 9153 / C-125) (Bacillus halodurans).